A 944-amino-acid chain; its full sequence is Putative ATP-dependent RNA helicase (944 aa).

The Helicase ATP-binding domain occupies 66–235 (TTPRSPIDGI…VPLHNLLMKL (170 aa)). 79-86 (HGVGTGKT) provides a ligand contact to ATP. The DEAH box signature appears at 183 to 186 (DEAH). A Helicase C-terminal domain is found at 451 to 523 (CLTREVMTVP…QIIGRGIRYQ (73 aa)).

The protein belongs to the DEAD box helicase family. DEAH subfamily.

The catalysed reaction is ATP + H2O = ADP + phosphate + H(+). The protein is Putative ATP-dependent RNA helicase of Heliothis virescens ascovirus 3e (HvAV-3e).